The following is a 218-amino-acid chain: Insulin-induced gene 2 protein (218 aa).

At 1–21 the chain is on the cytoplasmic side; it reads MGDRENVSYGSRPILAQKMNL. The helical transmembrane segment at 22 to 44 threads the bilayer; it reads LLRGFLLFLIGVFLALVLNLLQV. Over 45–63 the chain is Lumenal; the sequence is QRNVTLFPPDVLSSLFSSA. Residues 64–81 traverse the membrane as a helical segment; it reads WWVPLCCGTAAAAIGLLY. Residues 82–96 are Cytoplasmic-facing; that stretch reads PCIDRHLGEPHKFKR. The chain crosses the membrane as a helical span at residues 97–119; sequence EWSSVMRCVAVFVGINHASAKVD. The Lumenal segment spans residues 120-122; sequence FAN. Residues 123–141 traverse the membrane as a helical segment; sequence NMQLSLTLAALSIGLWWTF. The Cytoplasmic segment spans residues 142–146; the sequence is DRSRS. A helical membrane pass occupies residues 147-168; that stretch reads GLGLGIGISFFATLVSQLLVYN. Residues 169–182 lie on the Lumenal side of the membrane; that stretch reads GVYEYTAPDFLYVR. A helical transmembrane segment spans residues 183-200; it reads SWLPCIFFAGGITMGNIG. Residues 201–218 are Cytoplasmic-facing; it reads RQLEMYERKALVEKSHRD. Residues 212 to 218 carry the KxHxx motif; that stretch reads VEKSHRD.

It belongs to the INSIG family. In terms of assembly, interacts with scap; interaction is direct and only takes place in the presence of sterols; it prevents interaction between scap and the coat protein complex II (COPII). Associates with the SCAP-SREBP complex; association is mediated via its interaction with scap and only takes place in the presence of sterols.

The protein resides in the endoplasmic reticulum membrane. Its function is as follows. Oxysterol-binding protein that mediates feedback control of cholesterol synthesis by controlling both endoplasmic reticulum to Golgi transport of scap and degradation of hmgcr. Acts as a negative regulator of cholesterol biosynthesis by mediating the retention of the SCAP-SREBP complex in the endoplasmic reticulum, thereby blocking the processing of sterol regulatory element-binding proteins (SREBPs). Binds oxysterol, including 22-hydroxycholesterol, 24-hydroxycholesterol, 25-hydroxycholesterol and 27-hydroxycholesterol, regulating interaction with scap and retention of the SCAP-SREBP complex in the endoplasmic reticulum. In presence of oxysterol, interacts with scap, retaining the SCAP-SREBP complex in the endoplasmic reticulum, thereby preventing scap from escorting SREBPs to the Golgi. Sterol deprivation reduce oxysterol-binding, disrupting the interaction between insig2 and scap, thereby promoting Golgi transport of the SCAP-SREBP complex, followed by processing and nuclear translocation of SREBPs. Also regulates cholesterol synthesis by regulating degradation of hmgcr. This is Insulin-induced gene 2 protein from Xenopus laevis (African clawed frog).